Here is a 123-residue protein sequence, read N- to C-terminus: MTYGIVIVSHSPEIASGLKKLIREVAKNISLTAIGGLENGEIGTSFDRVMNAIEENEADNLLTFFDLGSARMNLDLVSEMTDKELTIFNVPLIEGAYTASALLEAGATFEAIKEQLEKMLIEK.

Positions 2-123 (TYGIVIVSHS…EQLEKMLIEK (122 aa)) constitute a PTS EIIA type-4 domain. Catalysis depends on H10, which acts as the Tele-phosphohistidine intermediate; for EIIA activity.

In terms of assembly, homodimer. The dihydroxyacetone kinase complex is composed of a homodimer of DhaM, a homodimer of DhaK and the subunit DhaL.

The enzyme catalyses dihydroxyacetone + phosphoenolpyruvate = dihydroxyacetone phosphate + pyruvate. It functions in the pathway polyol metabolism; glycerol degradation. In terms of biological role, component of the dihydroxyacetone kinase complex, which is responsible for the phosphoenolpyruvate (PEP)-dependent phosphorylation of dihydroxyacetone. DhaM serves as the phosphoryl donor. Is phosphorylated by phosphoenolpyruvate in an EI- and HPr-dependent reaction, and a phosphorelay system on histidine residues finally leads to phosphoryl transfer to DhaL and dihydroxyacetone. In Lactococcus lactis subsp. lactis (strain IL1403) (Streptococcus lactis), this protein is PTS-dependent dihydroxyacetone kinase, phosphotransferase subunit DhaM.